The primary structure comprises 416 residues: Pectin acetylesterase 3 (416 aa).

Positions M1–S25 are cleaved as a signal peptide. N-linked (GlcNAc...) asparagine glycosylation is present at N131. Active-site charge relay system residues include S198 and D294. N-linked (GlcNAc...) asparagine glycosylation occurs at N324. H361 (charge relay system) is an active-site residue.

The protein belongs to the pectinacetylesterase family.

The protein localises to the secreted. The protein resides in the cell wall. Hydrolyzes acetyl esters in homogalacturonan regions of pectin. In type I primary cell wall, galacturonic acid residues of pectin can be acetylated at the O-2 and O-3 positions. Decreasing the degree of acetylation of pectin gels in vitro alters their physical properties. This chain is Pectin acetylesterase 3, found in Arabidopsis thaliana (Mouse-ear cress).